The sequence spans 208 residues: RNA chaperone ProQ (208 aa).

Positions Ser106 to Ala127 are enriched in basic and acidic residues. The tract at residues Ser106 to Thr154 is disordered.

Belongs to the ProQ family.

It localises to the cytoplasm. Functionally, RNA chaperone with significant RNA binding, RNA strand exchange and RNA duplexing activities. In Aliivibrio fischeri (strain ATCC 700601 / ES114) (Vibrio fischeri), this protein is RNA chaperone ProQ.